Consider the following 765-residue polypeptide: 5-methyltetrahydropteroyltriglutamate--homocysteine methyltransferase (765 aa).

Residues 18 to 21 and lysine 114 contribute to the 5-methyltetrahydropteroyltri-L-glutamate site; that span reads REWK. L-homocysteine contacts are provided by residues 437-439 and glutamate 490; that span reads IGS. L-methionine is bound by residues 437 to 439 and glutamate 490; that span reads IGS. Tryptophan 567 is a binding site for 5-methyltetrahydropteroyltri-L-glutamate. Position 605 (aspartate 605) interacts with L-homocysteine. Aspartate 605 contributes to the L-methionine binding site. Residue glutamate 611 participates in 5-methyltetrahydropteroyltri-L-glutamate binding. Zn(2+)-binding residues include histidine 647, cysteine 649, and glutamate 671. Catalysis depends on histidine 700, which acts as the Proton donor. Zn(2+) is bound at residue cysteine 732.

The protein belongs to the vitamin-B12 independent methionine synthase family. Zn(2+) serves as cofactor.

It carries out the reaction 5-methyltetrahydropteroyltri-L-glutamate + L-homocysteine = tetrahydropteroyltri-L-glutamate + L-methionine. The protein operates within amino-acid biosynthesis; L-methionine biosynthesis via de novo pathway; L-methionine from L-homocysteine (MetE route): step 1/1. Catalyzes the transfer of a methyl group from 5-methyltetrahydrofolate to homocysteine resulting in methionine formation. This chain is 5-methyltetrahydropteroyltriglutamate--homocysteine methyltransferase, found in Listeria innocua serovar 6a (strain ATCC BAA-680 / CLIP 11262).